Consider the following 361-residue polypeptide: Phosphoserine aminotransferase (361 aa).

Arg-42 is an L-glutamate binding site. Pyridoxal 5'-phosphate contacts are provided by residues 76–77 (AR), Trp-102, Thr-153, Asp-173, and Gln-196. The residue at position 197 (Lys-197) is an N6-(pyridoxal phosphate)lysine. 238 to 239 (NT) is a binding site for pyridoxal 5'-phosphate.

Belongs to the class-V pyridoxal-phosphate-dependent aminotransferase family. SerC subfamily. As to quaternary structure, homodimer. Pyridoxal 5'-phosphate serves as cofactor.

The protein localises to the cytoplasm. It carries out the reaction O-phospho-L-serine + 2-oxoglutarate = 3-phosphooxypyruvate + L-glutamate. It catalyses the reaction 4-(phosphooxy)-L-threonine + 2-oxoglutarate = (R)-3-hydroxy-2-oxo-4-phosphooxybutanoate + L-glutamate. It functions in the pathway amino-acid biosynthesis; L-serine biosynthesis; L-serine from 3-phospho-D-glycerate: step 2/3. The protein operates within cofactor biosynthesis; pyridoxine 5'-phosphate biosynthesis; pyridoxine 5'-phosphate from D-erythrose 4-phosphate: step 3/5. Its function is as follows. Catalyzes the reversible conversion of 3-phosphohydroxypyruvate to phosphoserine and of 3-hydroxy-2-oxo-4-phosphonooxybutanoate to phosphohydroxythreonine. The sequence is that of Phosphoserine aminotransferase from Yersinia pseudotuberculosis serotype IB (strain PB1/+).